The sequence spans 230 residues: Phosphoglycerate mutase-like protein 4 (230 aa).

Histidine 21 acts as the Tele-phosphohistidine intermediate in catalysis. The active-site Proton donor/acceptor is the glutamate 96.

This sequence belongs to the phosphoglycerate mutase family.

Functionally, may play a role in carbohydrates metabolism. The polypeptide is Phosphoglycerate mutase-like protein 4 (Arabidopsis thaliana (Mouse-ear cress)).